Reading from the N-terminus, the 209-residue chain is Guanylyl cyclase-activating protein 3 (209 aa).

Glycine 2 is lipidated: N-myristoyl glycine. Asparagine 3 carries the post-translational modification Deamidated asparagine. EF-hand domains are found at residues 15-50, 52-87, 88-123, and 130-165; these read PTQE…QGLN, KANK…IMQE, KMEQ…VQAL, and SPEE…DQDL. Ca(2+)-binding residues include aspartate 65, asparagine 67, aspartate 69, glutamate 76, aspartate 101, aspartate 103, asparagine 105, serine 107, glutamate 112, aspartate 143, asparagine 145, aspartate 147, glutamate 149, and glutamate 154. A disordered region spans residues 187–209; that stretch reads QPDMETDSSKSPDKAGLGKVKMK.

In terms of tissue distribution, retina.

Stimulates guanylyl cyclase 1 (GC1) and GC2 when free calcium ions concentration is low and inhibits guanylyl cyclases when free calcium ions concentration is elevated. This Ca(2+)-sensitive regulation of guanylyl cyclase (GC) is a key event in recovery of the dark state of rod photoreceptors following light exposure. This Homo sapiens (Human) protein is Guanylyl cyclase-activating protein 3 (GUCA1C).